We begin with the raw amino-acid sequence, 506 residues long: UDP-N-acetylmuramoyl-L-alanyl-D-glutamate--2,6-diaminopimelate ligase (506 aa).

Ser-42 lines the UDP-N-acetyl-alpha-D-muramoyl-L-alanyl-D-glutamate pocket. An ATP-binding site is contributed by 125 to 131 (GTSGKTT). UDP-N-acetyl-alpha-D-muramoyl-L-alanyl-D-glutamate is bound by residues 166–167 (TT), Ser-193, and Arg-201. At Lys-233 the chain carries N6-carboxylysine. Residues Arg-395, 419–422 (DNPR), Gly-475, and Glu-479 contribute to the meso-2,6-diaminopimelate site. A Meso-diaminopimelate recognition motif motif is present at residues 419–422 (DNPR).

It belongs to the MurCDEF family. MurE subfamily. It depends on Mg(2+) as a cofactor. Post-translationally, carboxylation is probably crucial for Mg(2+) binding and, consequently, for the gamma-phosphate positioning of ATP.

It is found in the cytoplasm. The catalysed reaction is UDP-N-acetyl-alpha-D-muramoyl-L-alanyl-D-glutamate + meso-2,6-diaminopimelate + ATP = UDP-N-acetyl-alpha-D-muramoyl-L-alanyl-gamma-D-glutamyl-meso-2,6-diaminopimelate + ADP + phosphate + H(+). The protein operates within cell wall biogenesis; peptidoglycan biosynthesis. In terms of biological role, catalyzes the addition of meso-diaminopimelic acid to the nucleotide precursor UDP-N-acetylmuramoyl-L-alanyl-D-glutamate (UMAG) in the biosynthesis of bacterial cell-wall peptidoglycan. This chain is UDP-N-acetylmuramoyl-L-alanyl-D-glutamate--2,6-diaminopimelate ligase, found in Streptomyces avermitilis (strain ATCC 31267 / DSM 46492 / JCM 5070 / NBRC 14893 / NCIMB 12804 / NRRL 8165 / MA-4680).